We begin with the raw amino-acid sequence, 466 residues long: F-box/WD repeat-containing protein 15 (466 aa).

Residues Met1 to Leu45 enclose the F-box domain. WD repeat units follow at residues Gly101–Lys143, Glu146–Thr185, Asn187–Thr228, Leu339–Gln379, and Cys381–Cys419.

As to quaternary structure, part of an SCF (SKP1-CUL1-F-box protein) E3 ubiquitin-protein ligase complex. Interacts with KAT7 and SKP1. Specifically expressed in oocytes from follicles of the medullary region of the ovary.

It is found in the cytoplasm. The protein localises to the cytosol. The protein resides in the endoplasmic reticulum. Its subcellular location is the nucleus. The protein operates within protein modification; protein ubiquitination. Substrate-recognition component of an SCF (SKP1-CUL1-F-box protein)-type E3 ubiquitin ligase complex. Promotes KAT7 ubiquitination and subsequent degradation in collaboration with MAP2K1 kinase, leading to reduced histone H3K14 acetylation and increased cell proliferation. This Mus musculus (Mouse) protein is F-box/WD repeat-containing protein 15.